A 219-amino-acid chain; its full sequence is Flagellin A (219 aa).

A propeptide spanning residues 1–12 (MKVKEFMNNKKG) is cleaved from the precursor. N-linked (GlcNAc...) asparagine glycans are attached at residues asparagine 38 and asparagine 175.

Belongs to the archaeal flagellin family. N-linked glycans consist of the 779 Da trisaccharide beta-ManNAc(Thr)-(1-4)-beta-GlcNAc3NAcA-(1-3)-beta-GlcNAc.

The protein localises to the archaeal flagellum. Functionally, flagellin is the subunit protein which polymerizes to form the filaments of archaeal flagella. This chain is Flagellin A (flaA), found in Methanococcus voltae.